The following is a 123-amino-acid chain: UPF0738 protein Bcer98_0913 (123 aa).

This sequence belongs to the UPF0738 family.

In Bacillus cytotoxicus (strain DSM 22905 / CIP 110041 / 391-98 / NVH 391-98), this protein is UPF0738 protein Bcer98_0913.